The following is a 78-amino-acid chain: Small ribosomal subunit protein bS16c (78 aa).

This sequence belongs to the bacterial ribosomal protein bS16 family.

It is found in the plastid. Its subcellular location is the chloroplast. The sequence is that of Small ribosomal subunit protein bS16c from Chara vulgaris (Common stonewort).